Here is a 371-residue protein sequence, read N- to C-terminus: Peptide chain release factor 2 (371 aa).

Position 247 is an N5-methylglutamine (Gln-247).

This sequence belongs to the prokaryotic/mitochondrial release factor family. In terms of processing, methylated by PrmC. Methylation increases the termination efficiency of RF2.

The protein resides in the cytoplasm. Its function is as follows. Peptide chain release factor 2 directs the termination of translation in response to the peptide chain termination codons UGA and UAA. The protein is Peptide chain release factor 2 of Caulobacter vibrioides (strain ATCC 19089 / CIP 103742 / CB 15) (Caulobacter crescentus).